The primary structure comprises 137 residues: Large ribosomal subunit protein uL16 (137 aa).

It belongs to the universal ribosomal protein uL16 family. As to quaternary structure, part of the 50S ribosomal subunit.

Binds 23S rRNA and is also seen to make contacts with the A and possibly P site tRNAs. This chain is Large ribosomal subunit protein uL16, found in Stenotrophomonas maltophilia (strain R551-3).